The following is a 71-amino-acid chain: Small ribosomal subunit protein bS18 (71 aa).

This sequence belongs to the bacterial ribosomal protein bS18 family. As to quaternary structure, part of the 30S ribosomal subunit. Forms a tight heterodimer with protein bS6.

Binds as a heterodimer with protein bS6 to the central domain of the 16S rRNA, where it helps stabilize the platform of the 30S subunit. The sequence is that of Small ribosomal subunit protein bS18 from Synechococcus sp. (strain JA-2-3B'a(2-13)) (Cyanobacteria bacterium Yellowstone B-Prime).